We begin with the raw amino-acid sequence, 521 residues long: Probable protein kinase UbiB (521 aa).

In terms of domain architecture, Protein kinase spans 119 to 497; sequence SFEREPVASA…QKLTNRLLQA (379 aa). ATP-binding positions include 125–133 and Lys151; that span reads VASASIAQV. Asp286 functions as the Proton acceptor in the catalytic mechanism. A helical transmembrane segment spans residues 496–516; sequence QAIVSAGIGFVIALILLQLVV.

This sequence belongs to the ABC1 family. UbiB subfamily.

It localises to the cell inner membrane. It participates in cofactor biosynthesis; ubiquinone biosynthesis [regulation]. Is probably a protein kinase regulator of UbiI activity which is involved in aerobic coenzyme Q (ubiquinone) biosynthesis. This Delftia acidovorans (strain DSM 14801 / SPH-1) protein is Probable protein kinase UbiB.